A 498-amino-acid chain; its full sequence is MSALLTAAGLLFLGMLQAFPTDRPLKTTCAGDLSHYPGEAARNCCYQCPSGLSPTQPCPRGPAHCRKQCAPDYYVNEDGKCTACVTCLPGLVEKAPCSGNSPRICECQPGMHCCTPAVNSCARCKLHCSGEEVVKSPGTAKKDTICELPSSGSGPNCSNPGDRKTLTSHATPQAMPTLESPANDSARSLLPMRVTNLVQEDATELVKVPESSSSKAREPSPDPGNAEKNMTLELPSPGTLPDISTSENSKEPASTASTLSLVVDAWTSSRMQPTSPLSTGTPFLDPGPVLFWVAMVVLLVGSGSFLLCYWKACRRRFQQKFHLDYLVQTFQPKMEQTDSCPTEKLTQPQRSGSVTDPSTGHKLSPVSPPPAVETCASVGATYLENLPLLDDSPAGNPFSPREPPEPRVSTEHTNNRIEKIYIMKADTVIVGSVKTEVPEGRAPAGSTESELEAELEVDHAPHYPEQETEPPLGSCTEVMFSVEEGGKEDHGPTTVSEK.

A signal peptide spans 1 to 18 (MSALLTAAGLLFLGMLQA). The Extracellular segment spans residues 19–287 (FPTDRPLKTT…STGTPFLDPG (269 aa)). TNFR-Cys repeat units follow at residues 68–105 (QCAPDYYVNEDGKCTACVTCLPGLVEKAPCSGNSPRIC) and 106–146 (ECQP…DTIC). 5 disulfide bridges follow: C69-C81, C84-C97, C87-C105, C107-C121, and C128-C146. A disordered region spans residues 142 to 168 (KDTICELPSSGSGPNCSNPGDRKTLTS). Residues 149–160 (PSSGSGPNCSNP) are compositionally biased toward low complexity. N-linked (GlcNAc...) asparagine glycosylation is found at N156, N183, and N229. The interval 204–256 (ELVKVPESSSSKAREPSPDPGNAEKNMTLELPSPGTLPDISTSENSKEPASTA) is disordered. Over residues 242-256 (DISTSENSKEPASTA) the composition is skewed to polar residues. Residues 288 to 308 (PVLFWVAMVVLLVGSGSFLLC) form a helical membrane-spanning segment. The Cytoplasmic portion of the chain corresponds to 309 to 498 (YWKACRRRFQ…DHGPTTVSEK (190 aa)). Residues 338–358 (DSCPTEKLTQPQRSGSVTDPS) show a composition bias toward polar residues. Disordered regions lie at residues 338 to 370 (DSCPTEKLTQPQRSGSVTDPSTGHKLSPVSPPP), 389 to 411 (LDDSPAGNPFSPREPPEPRVSTE), and 436 to 498 (EVPE…VSEK). Residues S339 and S353 each carry the phosphoserine modification. Composition is skewed to basic and acidic residues over residues 402 to 411 (EPPEPRVSTE), 456 to 465 (EVDHAPHYPE), and 484 to 498 (EGGKEDHGPTTVSEK).

Belongs to the TNFR8 family. In terms of assembly, interacts with TRAF1, TRAF2, TRAF3 and TRAF5. In terms of tissue distribution, detected in thymus and in activated splenocytes.

The protein localises to the cell membrane. In terms of biological role, receptor for TNFSF8/CD30L. May play a role in the regulation of cellular growth and transformation of activated lymphoblasts. Regulates gene expression through activation of NF-kappa-B. In Mus musculus (Mouse), this protein is Tumor necrosis factor receptor superfamily member 8.